Here is a 134-residue protein sequence, read N- to C-terminus: Cytochrome b (134 aa).

3 helical membrane-spanning segments follow: residues 33 to 53 (FGSL…FLAM), 77 to 98 (WILR…FLHV), and 113 to 133 (WNIG…GYVL). Heme b is bound by residues histidine 83 and histidine 97.

It belongs to the cytochrome b family. The cytochrome bc1 complex contains 11 subunits: 3 respiratory subunits (MT-CYB, CYC1 and UQCRFS1), 2 core proteins (UQCRC1 and UQCRC2) and 6 low-molecular weight proteins (UQCRH/QCR6, UQCRB/QCR7, UQCRQ/QCR8, UQCR10/QCR9, UQCR11/QCR10 and a cleavage product of UQCRFS1). This cytochrome bc1 complex then forms a dimer. Heme b is required as a cofactor.

It localises to the mitochondrion inner membrane. In terms of biological role, component of the ubiquinol-cytochrome c reductase complex (complex III or cytochrome b-c1 complex) that is part of the mitochondrial respiratory chain. The b-c1 complex mediates electron transfer from ubiquinol to cytochrome c. Contributes to the generation of a proton gradient across the mitochondrial membrane that is then used for ATP synthesis. This is Cytochrome b (MT-CYB) from Rhinolophus hipposideros (Lesser horseshoe bat).